The primary structure comprises 97 residues: Ferredoxin-thioredoxin reductase, variable chain (97 aa).

Belongs to the ferredoxin thioredoxin reductase alpha subunit family. Heterodimer of subunit A (variable subunit) and subunit B (catalytic subunit). Heterodimeric FTR forms a complex with ferredoxin and thioredoxin.

Its subcellular location is the plastid. It localises to the chloroplast. Its function is as follows. Variable subunit of the ferredoxin-thioredoxin reductase (FTR), which catalyzes the two-electron reduction of thioredoxins by the electrons provided by reduced ferredoxin. The protein is Ferredoxin-thioredoxin reductase, variable chain of Zea mays (Maize).